We begin with the raw amino-acid sequence, 362 residues long: Probable dual-specificity RNA methyltransferase RlmN (362 aa).

Glu-105 (proton acceptor) is an active-site residue. Positions 111 to 344 constitute a Radical SAM core domain; that stretch reads HEYGNSICVT…VTIRREQGHD (234 aa). Cysteines 118 and 349 form a disulfide. [4Fe-4S] cluster contacts are provided by Cys-125, Cys-129, and Cys-132. S-adenosyl-L-methionine is bound by residues 175-176, Ser-207, 230-232, and Asn-306; these read GE and SLH. The active-site S-methylcysteine intermediate is the Cys-349.

It belongs to the radical SAM superfamily. RlmN family. Requires [4Fe-4S] cluster as cofactor.

It is found in the cytoplasm. It catalyses the reaction adenosine(2503) in 23S rRNA + 2 reduced [2Fe-2S]-[ferredoxin] + 2 S-adenosyl-L-methionine = 2-methyladenosine(2503) in 23S rRNA + 5'-deoxyadenosine + L-methionine + 2 oxidized [2Fe-2S]-[ferredoxin] + S-adenosyl-L-homocysteine. It carries out the reaction adenosine(37) in tRNA + 2 reduced [2Fe-2S]-[ferredoxin] + 2 S-adenosyl-L-methionine = 2-methyladenosine(37) in tRNA + 5'-deoxyadenosine + L-methionine + 2 oxidized [2Fe-2S]-[ferredoxin] + S-adenosyl-L-homocysteine. In terms of biological role, specifically methylates position 2 of adenine 2503 in 23S rRNA and position 2 of adenine 37 in tRNAs. The protein is Probable dual-specificity RNA methyltransferase RlmN of Bacillus cytotoxicus (strain DSM 22905 / CIP 110041 / 391-98 / NVH 391-98).